Consider the following 214-residue polypeptide: Cytochrome b (214 aa).

4 helical membrane-spanning segments follow: residues 31–51 (FGSM…FLAI), 75–96 (WIMQ…YIHI), 111–131 (WLSG…GYVL), and 176–196 (FFAL…LHIL). Residues His81 and His95 each coordinate heme b. Heme b-binding residues include His180 and His194. His199 lines the a ubiquinone pocket.

This sequence belongs to the cytochrome b family. The cytochrome bc1 complex contains 3 respiratory subunits (MT-CYB, CYC1 and UQCRFS1), 2 core proteins (UQCRC1 and UQCRC2) and probably 6 low-molecular weight proteins. It depends on heme b as a cofactor.

It is found in the mitochondrion inner membrane. In terms of biological role, component of the ubiquinol-cytochrome c reductase complex (complex III or cytochrome b-c1 complex) that is part of the mitochondrial respiratory chain. The b-c1 complex mediates electron transfer from ubiquinol to cytochrome c. Contributes to the generation of a proton gradient across the mitochondrial membrane that is then used for ATP synthesis. The chain is Cytochrome b (MT-CYB) from Crotalus atrox (Western diamondback rattlesnake).